The following is a 589-amino-acid chain: Putative phospholipase B-like 2 (589 aa).

Residues 1–41 form the signal peptide; it reads MVGQMYCYPGSHLARALTRALALALVLALLVGPFLSGLAGA. 2 N-linked (GlcNAc...) asparagine glycosylation sites follow: N88 and N110. Cysteines 142 and 152 form a disulfide. N231, N436, and N465 each carry an N-linked (GlcNAc...) asparagine glycan. A disulfide bond links C492 and C495. N515 is a glycosylation site (N-linked (GlcNAc...) asparagine).

It belongs to the phospholipase B-like family. In terms of assembly, interacts with IGF2R. Post-translationally, the p76 protein is synthesized as a 80 kDa precursor which is then processed into a N-terminal 32 kDa form and a C-terminal 45 kDa form. In terms of processing, glycosylated; contains mannose 6-phosphate sugars. Ubiquitously expressed, with highest levels in heart, brain and liver.

Its subcellular location is the lysosome lumen. Putative phospholipase. This Homo sapiens (Human) protein is Putative phospholipase B-like 2 (PLBD2).